Here is a 1031-residue protein sequence, read N- to C-terminus: Protein translocase subunit SecA (1031 aa).

Residues glutamine 143, 161–165 (GEGKT), and aspartate 662 contribute to the ATP site. Positions 1015, 1017, 1026, and 1027 each coordinate Zn(2+).

This sequence belongs to the SecA family. Monomer and homodimer. Part of the essential Sec protein translocation apparatus which comprises SecA, SecYEG and auxiliary proteins SecDF. Other proteins may also be involved. The cofactor is Zn(2+).

Its subcellular location is the cell inner membrane. The protein localises to the cytoplasm. The enzyme catalyses ATP + H2O + cellular proteinSide 1 = ADP + phosphate + cellular proteinSide 2.. Its function is as follows. Part of the Sec protein translocase complex. Interacts with the SecYEG preprotein conducting channel. Has a central role in coupling the hydrolysis of ATP to the transfer of proteins into and across the cell membrane, serving as an ATP-driven molecular motor driving the stepwise translocation of polypeptide chains across the membrane. The chain is Protein translocase subunit SecA from Chlorobaculum tepidum (strain ATCC 49652 / DSM 12025 / NBRC 103806 / TLS) (Chlorobium tepidum).